The following is a 397-amino-acid chain: Dual-specificity RNA methyltransferase RlmN (397 aa).

The active-site Proton acceptor is the E116. In terms of domain architecture, Radical SAM core spans 122-366 (EDDRGTLCIS…SPIRKTRGDD (245 aa)). The cysteines at positions 129 and 371 are disulfide-linked. The [4Fe-4S] cluster site is built by C136, C140, and C143. S-adenosyl-L-methionine contacts are provided by residues 195–196 (GE), S227, 249–251 (SFH), and N328. C371 (S-methylcysteine intermediate) is an active-site residue.

This sequence belongs to the radical SAM superfamily. RlmN family. [4Fe-4S] cluster serves as cofactor.

The protein resides in the cytoplasm. It catalyses the reaction adenosine(2503) in 23S rRNA + 2 reduced [2Fe-2S]-[ferredoxin] + 2 S-adenosyl-L-methionine = 2-methyladenosine(2503) in 23S rRNA + 5'-deoxyadenosine + L-methionine + 2 oxidized [2Fe-2S]-[ferredoxin] + S-adenosyl-L-homocysteine. The catalysed reaction is adenosine(37) in tRNA + 2 reduced [2Fe-2S]-[ferredoxin] + 2 S-adenosyl-L-methionine = 2-methyladenosine(37) in tRNA + 5'-deoxyadenosine + L-methionine + 2 oxidized [2Fe-2S]-[ferredoxin] + S-adenosyl-L-homocysteine. In terms of biological role, specifically methylates position 2 of adenine 2503 in 23S rRNA and position 2 of adenine 37 in tRNAs. m2A2503 modification seems to play a crucial role in the proofreading step occurring at the peptidyl transferase center and thus would serve to optimize ribosomal fidelity. In Ruegeria sp. (strain TM1040) (Silicibacter sp.), this protein is Dual-specificity RNA methyltransferase RlmN.